The chain runs to 187 residues: uncharacterized protein (187 aa).

A helical membrane pass occupies residues 3 to 23 (AIIIFLILFIVGVLIGVGVYY).

It is found in the membrane. This is an uncharacterized protein from Methanocaldococcus jannaschii (strain ATCC 43067 / DSM 2661 / JAL-1 / JCM 10045 / NBRC 100440) (Methanococcus jannaschii).